A 180-amino-acid polypeptide reads, in one-letter code: Bifunctional protein PyrR (180 aa).

A PRPP-binding motif is present at residues 101 to 113 (VILVDDVLYTGRT).

Belongs to the purine/pyrimidine phosphoribosyltransferase family. PyrR subfamily. As to quaternary structure, homodimer and homohexamer; in equilibrium.

It catalyses the reaction UMP + diphosphate = 5-phospho-alpha-D-ribose 1-diphosphate + uracil. Regulates transcriptional attenuation of the pyrimidine nucleotide (pyr) operon by binding in a uridine-dependent manner to specific sites on pyr mRNA. This disrupts an antiterminator hairpin in the RNA and favors formation of a downstream transcription terminator, leading to a reduced expression of downstream genes. Its function is as follows. Also displays a weak uracil phosphoribosyltransferase activity which is not physiologically significant. The chain is Bifunctional protein PyrR from Bacillus cytotoxicus (strain DSM 22905 / CIP 110041 / 391-98 / NVH 391-98).